Here is a 308-residue protein sequence, read N- to C-terminus: MHKDDILKELKAIVPEEIIKIDEPLKKYTYTQTGGKADYYLSPTHNEHVQAIVHYAYTHDIPVTYLGNGSNIIIREGGIRGIVISLLSLDYIDVSDDAIISGSGAAIIDVSRAARDHGLTGLEFACGIPGSIGGAVFMNAGAYGGEVKDCIDYALCVNNKGELITLTNKELELDYRNSIVQKEHLVVLEAAFTLAPGDQQEIQASMDDLTERRESKQPLEYPSCGSVFQRPPGHFAGKLIQDAHLQGHRIGGVEVSTKHAGFMVNVDKGTATDYEDLIHYVQKIVQEKFDVELHPEVRIIGEHPLNEQ.

The region spanning 32–197 is the FAD-binding PCMH-type domain; sequence QTGGKADYYL…LEAAFTLAPG (166 aa). Arg-176 is a catalytic residue. Ser-226 (proton donor) is an active-site residue. Residue Glu-296 is part of the active site.

Belongs to the MurB family. The cofactor is FAD.

It localises to the cytoplasm. The catalysed reaction is UDP-N-acetyl-alpha-D-muramate + NADP(+) = UDP-N-acetyl-3-O-(1-carboxyvinyl)-alpha-D-glucosamine + NADPH + H(+). It participates in cell wall biogenesis; peptidoglycan biosynthesis. Functionally, cell wall formation. This is UDP-N-acetylenolpyruvoylglucosamine reductase from Staphylococcus saprophyticus subsp. saprophyticus (strain ATCC 15305 / DSM 20229 / NCIMB 8711 / NCTC 7292 / S-41).